The chain runs to 442 residues: UDP-N-acetylmuramate--L-alanine ligase (442 aa).

Residue 109-115 (GAHGKTS) coordinates ATP.

Belongs to the MurCDEF family.

The protein resides in the cytoplasm. It carries out the reaction UDP-N-acetyl-alpha-D-muramate + L-alanine + ATP = UDP-N-acetyl-alpha-D-muramoyl-L-alanine + ADP + phosphate + H(+). It participates in cell wall biogenesis; peptidoglycan biosynthesis. Cell wall formation. The protein is UDP-N-acetylmuramate--L-alanine ligase of Streptococcus pyogenes serotype M3 (strain SSI-1).